The primary structure comprises 274 residues: Large ribosomal subunit protein uL2cz/uL2cy (274 aa).

2 disordered regions span residues 1-22 (MAIH…DSQV) and 225-274 (PVDH…RRSK).

The protein belongs to the universal ribosomal protein uL2 family. As to quaternary structure, part of the 50S ribosomal subunit.

It is found in the plastid. Its subcellular location is the chloroplast. This is Large ribosomal subunit protein uL2cz/uL2cy (rpl2-A) from Nasturtium officinale (Watercress).